The sequence spans 971 residues: Isoleucine--tRNA ligase (971 aa).

Residues 64–74 (PYANGHIHIGH) carry the 'HIGH' region motif. Glu-602 lines the L-isoleucyl-5'-AMP pocket. The short motif at 643-647 (KMSKS) is the 'KMSKS' region element. Lys-646 contacts ATP.

It belongs to the class-I aminoacyl-tRNA synthetase family. IleS type 1 subfamily. As to quaternary structure, monomer.

It localises to the cytoplasm. It catalyses the reaction tRNA(Ile) + L-isoleucine + ATP = L-isoleucyl-tRNA(Ile) + AMP + diphosphate. Catalyzes the attachment of isoleucine to tRNA(Ile). As IleRS can inadvertently accommodate and process structurally similar amino acids such as valine, to avoid such errors it has two additional distinct tRNA(Ile)-dependent editing activities. One activity is designated as 'pretransfer' editing and involves the hydrolysis of activated Val-AMP. The other activity is designated 'posttransfer' editing and involves deacylation of mischarged Val-tRNA(Ile). The sequence is that of Isoleucine--tRNA ligase from Bartonella henselae (strain ATCC 49882 / DSM 28221 / CCUG 30454 / Houston 1) (Rochalimaea henselae).